The sequence spans 988 residues: Bifunctional glutamine synthetase adenylyltransferase/adenylyl-removing enzyme (988 aa).

The interval 1-472 (MTKRETVERR…RYSALFEQET (472 aa)) is adenylyl removase. An adenylyl transferase region spans residues 476–988 (GEAGNLVFTG…AFVAVVKNGG (513 aa)).

It belongs to the GlnE family. Requires Mg(2+) as cofactor.

It carries out the reaction [glutamine synthetase]-O(4)-(5'-adenylyl)-L-tyrosine + phosphate = [glutamine synthetase]-L-tyrosine + ADP. The enzyme catalyses [glutamine synthetase]-L-tyrosine + ATP = [glutamine synthetase]-O(4)-(5'-adenylyl)-L-tyrosine + diphosphate. In terms of biological role, involved in the regulation of glutamine synthetase GlnA, a key enzyme in the process to assimilate ammonia. When cellular nitrogen levels are high, the C-terminal adenylyl transferase (AT) inactivates GlnA by covalent transfer of an adenylyl group from ATP to specific tyrosine residue of GlnA, thus reducing its activity. Conversely, when nitrogen levels are low, the N-terminal adenylyl removase (AR) activates GlnA by removing the adenylyl group by phosphorolysis, increasing its activity. The regulatory region of GlnE binds the signal transduction protein PII (GlnB) which indicates the nitrogen status of the cell. In Agrobacterium fabrum (strain C58 / ATCC 33970) (Agrobacterium tumefaciens (strain C58)), this protein is Bifunctional glutamine synthetase adenylyltransferase/adenylyl-removing enzyme.